The primary structure comprises 369 residues: Peptidyl-prolyl cis-trans isomerase D (369 aa).

The PPIase cyclophilin-type domain maps to 7-175 (YFDISCNGKP…EDWKIADCGE (169 aa)). 3 TPR repeats span residues 217–250 (VSKIKDIGTKLLKEGKLEKSYEKYTKANSYLNDY), 268–301 (LSCYLNAALVALKLKHGKDAIAAANNALEVEQID), and 306–339 (TKALYRKGMGYILVKDEEQAQKILEEALELEPND).

The protein belongs to the cyclophilin-type PPIase family. PPIase D subfamily.

It localises to the cytoplasm. It catalyses the reaction [protein]-peptidylproline (omega=180) = [protein]-peptidylproline (omega=0). PPIases accelerate the folding of proteins. It catalyzes the cis-trans isomerization of proline imidic peptide bonds in oligopeptides. The polypeptide is Peptidyl-prolyl cis-trans isomerase D (CPR6) (Candida albicans (strain SC5314 / ATCC MYA-2876) (Yeast)).